The primary structure comprises 473 residues: Phosphatidylserine synthase 1 (473 aa).

At 1–35 the chain is on the cytoplasmic side; the sequence is MAACVGSRTLSKDDVNYRLHFRMINEQQVEDITLE. The helical transmembrane segment at 36–56 threads the bilayer; that stretch reads FFYRPHTITLLSFTILSLMAF. Topologically, residues 57–72 are lumenal; that stretch reads AFTRDDSVPEENIWRG. Residues 73-93 form a helical membrane-spanning segment; it reads ILSVIFFFLIISVLAFPNGPF. Residues 94-102 lie on the Cytoplasmic side of the membrane; sequence TRPHPAIWR. A helical membrane pass occupies residues 103–123; it reads MVFGLSVLYFLFLVFVLFLNF. Residues 124-186 are Lumenal-facing; that stretch reads EQVKAVMYWL…AMKALLIRSY (63 aa). A helical transmembrane segment spans residues 187 to 207; the sequence is GLCWTISITWELTELFFMHLL. Residues 208–216 are Cytoplasmic-facing; sequence PNFAECWWD. The chain crosses the membrane as a helical span at residues 217-237; that stretch reads QVILDILLCNGGGIWLGMVVC. At 238–286 the chain is on the lumenal side; that stretch reads RFLEMRTYHWASFKDIHTTTGKIKRAVLQFTPASWTYVRWFDPKSSFQR. The helical transmembrane segment at 287-307 threads the bilayer; that stretch reads VAGIYLFMIIWQLTELNTFFL. At 308–319 the chain is on the cytoplasmic side; the sequence is KHIFVFQASHPL. Residues 320-342 form a helical membrane-spanning segment; sequence SWGRILFIGIITAPTVRQYYAYL. Residues 343–355 lie on the Lumenal side of the membrane; sequence TDTQCKRVGTQCW. The helical transmembrane segment at 356–376 threads the bilayer; sequence VFGVIAFLEAIVCIKFGQDLF. Residues 377–380 lie on the Cytoplasmic side of the membrane; sequence SKTQ. The chain crosses the membrane as a helical span at residues 381–401; it reads ILYVVFWLLCVAFTTFLCLYG. Topologically, residues 402–473 are lumenal; that stretch reads MVWYAEYYGH…SKVTNGIGKK (72 aa). The disordered stretch occupies residues 420-473; the sequence is EDSPYSPDASWLHSKFSKGADNSPPKHPVNSESHSSRRRNRHSRSKVTNGIGKK. A compositionally biased stretch (basic residues) spans 455–464; sequence SRRRNRHSRS.

This sequence belongs to the phosphatidyl serine synthase family.

It localises to the endoplasmic reticulum membrane. The enzyme catalyses a 1,2-diacyl-sn-glycero-3-phosphoethanolamine + L-serine = a 1,2-diacyl-sn-glycero-3-phospho-L-serine + ethanolamine. It carries out the reaction a 1,2-diacyl-sn-glycero-3-phosphocholine + L-serine = a 1,2-diacyl-sn-glycero-3-phospho-L-serine + choline. It functions in the pathway phospholipid metabolism; phosphatidylserine biosynthesis. Its function is as follows. Catalyzes a base-exchange reaction in which the polar head group of phosphatidylethanolamine (PE) or phosphatidylcholine (PC) is replaced by L-serine. Catalyzes mainly the conversion of phosphatidylcholine but also converts, in vitro and to a lesser extent, phosphatidylethanolamine. The chain is Phosphatidylserine synthase 1 (PTDSS1) from Gallus gallus (Chicken).